The sequence spans 196 residues: MATMREPRFKLSRRLGVNIYGHPKAMKRFETTNTRKKKISDYGMHLIEKQKLKAYYGVLEKQFSRYVKAAMKNKEASGSSLLKILECRLDNVVYRIGFANSIRQARQMVSHGLILVNGKKLDIPSYEVQVGDVVSLKEKHRQNEMFSNNFMNLSTFNVPYIEKNPDEFSGKLLRLPNIDEIPIKVNEVAVIEFYSK.

One can recognise an S4 RNA-binding domain in the interval C87–N149.

Belongs to the universal ribosomal protein uS4 family. As to quaternary structure, part of the 30S ribosomal subunit. Contacts protein S5. The interaction surface between S4 and S5 is involved in control of translational fidelity.

Its function is as follows. One of the primary rRNA binding proteins, it binds directly to 16S rRNA where it nucleates assembly of the body of the 30S subunit. With S5 and S12 plays an important role in translational accuracy. The polypeptide is Small ribosomal subunit protein uS4C (rpsD3) (Clostridium acetobutylicum (strain ATCC 824 / DSM 792 / JCM 1419 / IAM 19013 / LMG 5710 / NBRC 13948 / NRRL B-527 / VKM B-1787 / 2291 / W)).